The chain runs to 532 residues: Type 2 DNA topoisomerase 6 subunit B (532 aa).

ATP is bound by residues Asn-41, Asp-75, 96–97 (SK), 105–112 (GMYGLGVK), and Lys-427.

It belongs to the TOP6B family. Homodimer. Heterotetramer of two Top6A and two Top6B chains.

The catalysed reaction is ATP-dependent breakage, passage and rejoining of double-stranded DNA.. Relaxes both positive and negative superturns and exhibits a strong decatenase activity. This is Type 2 DNA topoisomerase 6 subunit B from Sulfurisphaera tokodaii (strain DSM 16993 / JCM 10545 / NBRC 100140 / 7) (Sulfolobus tokodaii).